The chain runs to 83 residues: MIYGIKLLNMNILYLIERRCADNIVSIIINNIHKKVSKTLEEKWTIKNSKIEYCHVQSAVSSTFFDLFLGIRDEYFERIMPLE.

This is an uncharacterized protein from Rickettsia conorii (strain ATCC VR-613 / Malish 7).